The primary structure comprises 428 residues: Serine--tRNA ligase (428 aa).

Thr-235–Glu-237 contributes to the L-serine binding site. Position 266–268 (Arg-266–Glu-268) interacts with ATP. Residue Glu-289 coordinates L-serine. An ATP-binding site is contributed by Glu-353 to Ser-356. Ser-389 is a binding site for L-serine.

This sequence belongs to the class-II aminoacyl-tRNA synthetase family. Type-1 seryl-tRNA synthetase subfamily. Homodimer. The tRNA molecule binds across the dimer.

It is found in the cytoplasm. It carries out the reaction tRNA(Ser) + L-serine + ATP = L-seryl-tRNA(Ser) + AMP + diphosphate + H(+). It catalyses the reaction tRNA(Sec) + L-serine + ATP = L-seryl-tRNA(Sec) + AMP + diphosphate + H(+). Its pathway is aminoacyl-tRNA biosynthesis; selenocysteinyl-tRNA(Sec) biosynthesis; L-seryl-tRNA(Sec) from L-serine and tRNA(Sec): step 1/1. Its function is as follows. Catalyzes the attachment of serine to tRNA(Ser). Is also able to aminoacylate tRNA(Sec) with serine, to form the misacylated tRNA L-seryl-tRNA(Sec), which will be further converted into selenocysteinyl-tRNA(Sec). This is Serine--tRNA ligase from Shewanella baltica (strain OS223).